Reading from the N-terminus, the 224-residue chain is Myogenin (224 aa).

S77 and S79 each carry phosphoserine; by CaMK2G. A bHLH domain is found at 81–132 (DRRRAATLREKRRLKKVNEAFEALKRSTLLNPNQRLPKVEILRSAIQYIERL). A Phosphothreonine; by CaMK2G modification is found at T87.

As to quaternary structure, homodimer and heterodimer with E12; heterodimerization enhances MYOG DNA-binding and transcriptional activities. Interacts with SMARCA4/BRG1/BAF190A. Interacts (via C-terminal region) with SSRP1 and SUPT16H; the interaction is indicative of an interaction with the FACT complex. Interacts with CSRP3. In terms of processing, phosphorylated by CAMK2G on threonine and serine amino acids in a muscle activity-dependent manner. Phosphorylation of Thr-87 impairs both DNA-binding and trans-activation functions in contracting muscles.

It localises to the nucleus. Functionally, acts as a transcriptional activator that promotes transcription of muscle-specific target genes and plays a role in muscle differentiation, cell cycle exit and muscle atrophy. Essential for the development of functional embryonic skeletal fiber muscle differentiation. However is dispensable for postnatal skeletal muscle growth; phosphorylation by CAMK2G inhibits its transcriptional activity in respons to muscle activity. Required for the recruitment of the FACT complex to muscle-specific promoter regions, thus promoting gene expression initiation. During terminal myoblast differentiation, plays a role as a strong activator of transcription at loci with an open chromatin structure previously initiated by MYOD1. Together with MYF5 and MYOD1, co-occupies muscle-specific gene promoter core regions during myogenesis. Also cooperates with myocyte-specific enhancer factor MEF2D and BRG1-dependent recruitment of SWI/SNF chromatin-remodeling enzymes to alter chromatin structure at myogenic late gene promoters. Facilitates cell cycle exit during terminal muscle differentiation through the up-regulation of miR-20a expression, which in turn represses genes involved in cell cycle progression. Binds to the E-box containing (E1) promoter region of the miR-20a gene. Also plays a role in preventing reversal of muscle cell differentiation. Contributes to the atrophy-related gene expression in adult denervated muscles. Induces fibroblasts to differentiate into myoblasts. The chain is Myogenin (MYOG) from Homo sapiens (Human).